A 202-amino-acid polypeptide reads, in one-letter code: CASP-like protein 2B2 (202 aa).

Over 1 to 29 (MSYLGVGVSPGNVPVYHGMNLKVIDRRVR) the chain is Cytoplasmic. The helical transmembrane segment at 30–50 (LAELVLRCVICALGVLAAVLV) threads the bilayer. Residues 51-72 (GTDTQVKEIFSIQKKARFTDMK) lie on the Extracellular side of the membrane. The helical transmembrane segment at 73–93 (ALVFLVVANGIAAAYSLVQGV) threads the bilayer. At 94–118 (RCVVGMVKGSVLFSKPLAWVIFSGD) the chain is on the cytoplasmic side. A helical transmembrane segment spans residues 119-139 (QMMAYLTLSAVAAAVQSASFA). Residues 140–164 (KLGQPDLQWMKICNMYGKFCNQVGE) are Extracellular-facing. A helical transmembrane segment spans residues 165–185 (GIASALLVSVSMVVLSCISSF). The Cytoplasmic segment spans residues 186–202 (SLFRLYGGNKGKDGARW).

It belongs to the Casparian strip membrane proteins (CASP) family. In terms of assembly, homodimer and heterodimers.

It localises to the cell membrane. In Populus trichocarpa (Western balsam poplar), this protein is CASP-like protein 2B2.